Reading from the N-terminus, the 194-residue chain is MSAITITDAAHDYLAELLAKQNGTDIGIRIFITQPGTPAAETCLAYCKPHERHPDDIAQALKSFTLWIDAVSEPFLEDAIVDYANDRMGGQLTIKAPNAKVPMIDEDSPLGERINYYLQTEINPGLASHGGQVSLVDIVEEGIAVLRFGGGCQGCGMVDMTLKDGVEKTLLERIPDLKGVRDATDHSNRENAYY.

[4Fe-4S] cluster contacts are provided by C152 and C155.

This sequence belongs to the NfuA family. In terms of assembly, homodimer. [4Fe-4S] cluster serves as cofactor.

Its function is as follows. Involved in iron-sulfur cluster biogenesis. Binds a 4Fe-4S cluster, can transfer this cluster to apoproteins, and thereby intervenes in the maturation of Fe/S proteins. Could also act as a scaffold/chaperone for damaged Fe/S proteins. The sequence is that of Fe/S biogenesis protein NfuA from Azotobacter vinelandii (strain DJ / ATCC BAA-1303).